The sequence spans 159 residues: Large ribosomal subunit protein mL50 (159 aa).

It belongs to the mitochondrion-specific ribosomal protein mL50 family. As to quaternary structure, component of the mitochondrial ribosome large subunit (39S) which comprises a 16S rRNA and about 50 distinct proteins.

Its subcellular location is the mitochondrion. The protein is Large ribosomal subunit protein mL50 (Mrpl50) of Mus musculus (Mouse).